The chain runs to 43 residues: uncharacterized protein (43 aa).

The N-terminal stretch at 1-17 (MYRRLLLNLFCMVFLQA) is a signal peptide.

This is an uncharacterized protein from Helicobacter pylori (strain J99 / ATCC 700824) (Campylobacter pylori J99).